Consider the following 493-residue polypeptide: Protein nucleotidyltransferase YdiU (493 aa).

ATP-binding residues include glycine 94, glycine 96, arginine 97, lysine 117, aspartate 129, glycine 130, arginine 180, and arginine 187. The active-site Proton acceptor is the aspartate 256. Mg(2+) contacts are provided by asparagine 257 and aspartate 266. Aspartate 266 provides a ligand contact to ATP.

This sequence belongs to the SELO family. It depends on Mg(2+) as a cofactor. The cofactor is Mn(2+).

The catalysed reaction is L-seryl-[protein] + ATP = 3-O-(5'-adenylyl)-L-seryl-[protein] + diphosphate. The enzyme catalyses L-threonyl-[protein] + ATP = 3-O-(5'-adenylyl)-L-threonyl-[protein] + diphosphate. It carries out the reaction L-tyrosyl-[protein] + ATP = O-(5'-adenylyl)-L-tyrosyl-[protein] + diphosphate. It catalyses the reaction L-histidyl-[protein] + UTP = N(tele)-(5'-uridylyl)-L-histidyl-[protein] + diphosphate. The catalysed reaction is L-seryl-[protein] + UTP = O-(5'-uridylyl)-L-seryl-[protein] + diphosphate. The enzyme catalyses L-tyrosyl-[protein] + UTP = O-(5'-uridylyl)-L-tyrosyl-[protein] + diphosphate. Its function is as follows. Nucleotidyltransferase involved in the post-translational modification of proteins. It can catalyze the addition of adenosine monophosphate (AMP) or uridine monophosphate (UMP) to a protein, resulting in modifications known as AMPylation and UMPylation. The protein is Protein nucleotidyltransferase YdiU of Hahella chejuensis (strain KCTC 2396).